The following is a 539-amino-acid chain: Chaperonin GroEL (539 aa).

Residues Thr-29 to Pro-32, Asp-86 to Thr-90, Gly-413, Asn-476 to Ala-478, and Asp-492 contribute to the ATP site.

This sequence belongs to the chaperonin (HSP60) family. In terms of assembly, forms a cylinder of 14 subunits composed of two heptameric rings stacked back-to-back. Interacts with the co-chaperonin GroES.

It is found in the cytoplasm. The enzyme catalyses ATP + H2O + a folded polypeptide = ADP + phosphate + an unfolded polypeptide.. Its function is as follows. Together with its co-chaperonin GroES, plays an essential role in assisting protein folding. The GroEL-GroES system forms a nano-cage that allows encapsulation of the non-native substrate proteins and provides a physical environment optimized to promote and accelerate protein folding. The polypeptide is Chaperonin GroEL (Leuconostoc mesenteroides subsp. mesenteroides (strain ATCC 8293 / DSM 20343 / BCRC 11652 / CCM 1803 / JCM 6124 / NCDO 523 / NBRC 100496 / NCIMB 8023 / NCTC 12954 / NRRL B-1118 / 37Y)).